Consider the following 135-residue polypeptide: Small ribosomal subunit protein uS9 (135 aa).

Residues 108-118 are compositionally biased toward basic and acidic residues; it reads VGDPRRTEPHK. Residues 108-135 form a disordered region; sequence VGDPRRTEPHKPNRSTKGPRAKRQKSYR. Residues 119 to 135 are compositionally biased toward basic residues; that stretch reads PNRSTKGPRAKRQKSYR.

This sequence belongs to the universal ribosomal protein uS9 family.

This is Small ribosomal subunit protein uS9 (rps9) from Pyrococcus abyssi (strain GE5 / Orsay).